A 344-amino-acid chain; its full sequence is Methionine import ATP-binding protein MetN 1 (344 aa).

The ABC transporter domain maps to 2–241 (IEIRNISQRF…PHHEVTRALI (240 aa)). 38-45 (GRSGAGKS) serves as a coordination point for ATP.

This sequence belongs to the ABC transporter superfamily. Methionine importer (TC 3.A.1.24) family. As to quaternary structure, the complex is composed of two ATP-binding proteins (MetN), two transmembrane proteins (MetI) and a solute-binding protein (MetQ).

Its subcellular location is the cell inner membrane. It carries out the reaction L-methionine(out) + ATP + H2O = L-methionine(in) + ADP + phosphate + H(+). The enzyme catalyses D-methionine(out) + ATP + H2O = D-methionine(in) + ADP + phosphate + H(+). In terms of biological role, part of the ABC transporter complex MetNIQ involved in methionine import. Responsible for energy coupling to the transport system. The sequence is that of Methionine import ATP-binding protein MetN 1 from Paraburkholderia xenovorans (strain LB400).